The chain runs to 159 residues: Probable chemoreceptor glutamine deamidase CheD 1 (159 aa).

The protein belongs to the CheD family.

It catalyses the reaction L-glutaminyl-[protein] + H2O = L-glutamyl-[protein] + NH4(+). Functionally, probably deamidates glutamine residues to glutamate on methyl-accepting chemotaxis receptors (MCPs), playing an important role in chemotaxis. The chain is Probable chemoreceptor glutamine deamidase CheD 1 from Methanosarcina acetivorans (strain ATCC 35395 / DSM 2834 / JCM 12185 / C2A).